The primary structure comprises 275 residues: 2,3,4,5-tetrahydropyridine-2,6-dicarboxylate N-succinyltransferase (275 aa).

Positions 104 and 141 each coordinate substrate.

This sequence belongs to the transferase hexapeptide repeat family. As to quaternary structure, homotrimer.

It is found in the cytoplasm. It carries out the reaction (S)-2,3,4,5-tetrahydrodipicolinate + succinyl-CoA + H2O = (S)-2-succinylamino-6-oxoheptanedioate + CoA. The protein operates within amino-acid biosynthesis; L-lysine biosynthesis via DAP pathway; LL-2,6-diaminopimelate from (S)-tetrahydrodipicolinate (succinylase route): step 1/3. The chain is 2,3,4,5-tetrahydropyridine-2,6-dicarboxylate N-succinyltransferase from Haemophilus influenzae (strain PittEE).